A 447-amino-acid polypeptide reads, in one-letter code: UMP-CMP kinase 2, mitochondrial (447 aa).

The N-terminal 73 residues, Met1–Tyr73, are a transit peptide targeting the mitochondrion. Residue Gly259–Thr266 participates in ATP binding. The stretch at Glu380–Met412 forms a coiled coil.

This sequence belongs to the thymidylate kinase family. Strongly expressed in the brain.

The protein resides in the mitochondrion. It carries out the reaction CMP + ATP = CDP + ADP. The catalysed reaction is dCMP + ATP = dCDP + ADP. The enzyme catalyses a 2'-deoxyribonucleoside 5'-diphosphate + ATP = a 2'-deoxyribonucleoside 5'-triphosphate + ADP. It catalyses the reaction a ribonucleoside 5'-diphosphate + ATP = a ribonucleoside 5'-triphosphate + ADP. Functionally, mitochondrial nucleotide monophosphate kinase needed for salvage dNTP synthesis that mediates immunomodulatory and antiviral activities through IFN-dependent and IFN-independent pathways. Restricts the replication of multiple viruses including flaviviruses or coronaviruses. Together with viperin/RSAD2 and ddhCTP, suppresses the replication of several coronaviruses through inhibition of the viral RNA-dependent RNA polymerase activities. Concerning flaviviruses, restricts RNA translation when localized to the mitochondria independently of its kinase activity. Is able to phosphorylate dUMP, dCMP, CMP, UMP and monophosphates of the pyrimidine nucleoside analogs ddC, dFdC, araC, BVDU and FdUrd with ATP as phosphate donor. Efficacy is highest for dUMP followed by dCMP while CMP and UMP are poor substrates. Controls therefore mitochondrial DNA synthesis by supplying required deoxyribonucleotides. CMPK2-dependent mitochondrial DNA synthesis is necessary for the production of oxidized mitochondrial DNA fragments after exposure to NLRP3 activators. In turn, cytosolic oxidized mtDNA associates with the NLRP3 inflammasome complex and is required for its activation. In Mus musculus (Mouse), this protein is UMP-CMP kinase 2, mitochondrial (Cmpk2).